The primary structure comprises 382 residues: Alcohol dehydrogenase 1 (382 aa).

Positions 49, 51, 71, 101, 104, 107, 115, and 179 each coordinate Zn(2+). An alcohol is bound by residues T51 and H71. Position 51 (T51) interacts with NAD(+). Residues 204-209 (GLGAVG), D228, R233, T275, V298, 298-300 (VGV), F325, and R375 each bind NAD(+).

This sequence belongs to the zinc-containing alcohol dehydrogenase family. As to quaternary structure, homodimer. It depends on Zn(2+) as a cofactor.

It is found in the cytoplasm. It catalyses the reaction a primary alcohol + NAD(+) = an aldehyde + NADH + H(+). The catalysed reaction is a secondary alcohol + NAD(+) = a ketone + NADH + H(+). Its function is as follows. This protein is responsible for the conversion of alcohols to aldehydes in plants and is important for NAD metabolism during anaerobic respiration. This Petunia hybrida (Petunia) protein is Alcohol dehydrogenase 1 (ADH1).